Here is a 461-residue protein sequence, read N- to C-terminus: Mannan endo-1,4-beta-mannosidase 4 (461 aa).

Substrate contacts are provided by Trp80 and Asn195. The active-site Proton donor is the Glu196. Tyr274 contacts substrate. Glu314 (nucleophile) is an active-site residue. Residues Trp357 and Asp364 each coordinate substrate.

The protein belongs to the glycosyl hydrolase 5 (cellulase A) family. As to expression, ubiquitous.

The catalysed reaction is Random hydrolysis of (1-&gt;4)-beta-D-mannosidic linkages in mannans, galactomannans and glucomannans.. In Oryza sativa subsp. japonica (Rice), this protein is Mannan endo-1,4-beta-mannosidase 4 (MAN4).